We begin with the raw amino-acid sequence, 269 residues long: Hydroxyethylthiazole kinase (269 aa).

Residue Met42 coordinates substrate. Residues Arg118 and Ser164 each coordinate ATP. Substrate is bound at residue Gly191.

It belongs to the Thz kinase family. The cofactor is Mg(2+).

It catalyses the reaction 5-(2-hydroxyethyl)-4-methylthiazole + ATP = 4-methyl-5-(2-phosphooxyethyl)-thiazole + ADP + H(+). It functions in the pathway cofactor biosynthesis; thiamine diphosphate biosynthesis; 4-methyl-5-(2-phosphoethyl)-thiazole from 5-(2-hydroxyethyl)-4-methylthiazole: step 1/1. Functionally, catalyzes the phosphorylation of the hydroxyl group of 4-methyl-5-beta-hydroxyethylthiazole (THZ). The chain is Hydroxyethylthiazole kinase from Listeria monocytogenes serotype 4b (strain F2365).